We begin with the raw amino-acid sequence, 154 residues long: Aspartate carbamoyltransferase regulatory chain (154 aa).

Positions 109, 114, 138, and 141 each coordinate Zn(2+).

The protein belongs to the PyrI family. Contains catalytic and regulatory chains. Zn(2+) is required as a cofactor.

Involved in allosteric regulation of aspartate carbamoyltransferase. This is Aspartate carbamoyltransferase regulatory chain from Tolumonas auensis (strain DSM 9187 / NBRC 110442 / TA 4).